Consider the following 1038-residue polypeptide: Zinc finger protein 628 (1038 aa).

A disordered region spans residues 1–31 (MAGSHVDMAPASTTEGTGEKPGPTAPAPTPA). Low complexity predominate over residues 13–22 (TTEGTGEKPG). C2H2-type zinc fingers lie at residues 34-56 (YECGECGKSFRWSSRLLHHQRTH), 62-84 (YKCPDCPKAFKGSSALLYHQRGH), 90-112 (YQCPDCPKAFKRSSLLQIHRSVH), 118-140 (FTCGQCGLAFKWSSHYQYHLRQH), 146-168 (YPCPDCPKAFKNSSSLRRHRHVH), and 174-196 (YTCGICGKSFTQSTNLRQHQRVH). Position 197 is a phosphothreonine (Thr197). The C2H2-type 7 zinc finger occupies 202 to 224 (FRCPLCPKTFTHSSNLLLHHRTH). Disordered regions lie at residues 220–242 (HHRTHGPAPGPAPAPAPPGETSR) and 254–273 (LQPRSPPEPPAPPPQPPPVV). Composition is skewed to pro residues over residues 227 to 237 (APGPAPAPAPP) and 257 to 273 (RSPPEPPAPPPQPPPVV). C2H2-type zinc fingers lie at residues 346–368 (FACLPCGKSFRTVAGLSRHQHSH), 376–398 (FRCGSCDGAFPQLASLLAHQQCH), 446–468 (YKCAECGKAFKGSSGLRYHLRDH), 474–496 (YQCGECGKAFKRSSLLAIHQRVH), 502–524 (FTCGQCGLTFKWSSHYQYHLRLH), 530–552 (YACTECGKAFRNTSCLRRHRHVH), and 558–580 (HSCSVCGKSFAQTSNLRQHQRVH). The residue at position 581 (Thr581) is a Phosphothreonine. C2H2-type zinc fingers lie at residues 586–608 (FRCPLCPKTFTHSSNLLLHQRTH) and 614–636 (FACPICGRGFVMAAYLQRHLRTH). 2 disordered regions span residues 637–661 (TPATTTSGTTGSAVASQPPAPLAAA) and 717–763 (PSSV…AGQG). Residues 723 to 733 (PTPPPPPPPPK) are compositionally biased toward pro residues. The span at 734 to 756 (VILLPPASAGGPGSGAARPGPRS) shows a compositional bias: low complexity. A run of 4 repeats spans residues 811-821 (VQLQPAQEVAT), 822-832 (VQLQPAQEVTT), 833-843 (VQLQPAQEVTT), and 844-854 (VQLQPLTGQVS). A 4 X 11 AA tandem repeats of VQLQP-[AL]-[QT]-[EG]-[VQ]-[ATV]-[ST] region spans residues 811-854 (VQLQPAQEVATVQLQPAQEVTTVQLQPAQEVTTVQLQPLTGQVS). Residues 922–1038 (DGEQTRLCVQ…LPAVQLVHTF (117 aa)) form an interaction with TAF4B region.

As to quaternary structure, interacts with TAF4B. As to expression, expressed widely in testis, in both germline and somatic cells. Seems to have particularly strong expression in meiotic spermatocytes, postmeiotic round spermatids and Sertoli cells. Not detected in elongating spermatids or mature sperm (at protein level). Expressed in testis, ovary, spleen, lung, brain, liver and kidney. Expressed in D3 embryonic stem cells and F9 embryonal carcinoma cells.

The protein resides in the nucleus. Functionally, transcriptional activator. Binds DNA on GT-box consensus sequence 5'-TTGGTT-3'. Plays a role in spermiogenesis. This Mus musculus (Mouse) protein is Zinc finger protein 628.